The primary structure comprises 81 residues: Antimicrobial peptide D1 (81 aa).

Residues 1 to 31 (MAKTVLGIHVTFLTLLFAVLLLNDVMYTPVE) form the signal peptide. Intrachain disulfides connect Cys-34–Cys-81, Cys-45–Cys-66, Cys-51–Cys-75, and Cys-55–Cys-77.

In terms of biological role, antimicrobial peptide probably active against fungi like B.sorokiniana, F.oxysporum, F.graminearum, F.avenaceum, B.cinerea, P.beta, P.infestans and P.debaryanum. This chain is Antimicrobial peptide D1, found in Stellaria media (Common chickweed).